The sequence spans 585 residues: Regulatory protein BlaR1 (585 aa).

The Extracellular segment spans residues 1–4; sequence MAKL. A helical transmembrane segment spans residues 5 to 22; the sequence is LIMSIVSFCFIFLLLLFF. Over 23–31 the chain is Cytoplasmic; it reads RYILKRYFN. Residues 32–48 traverse the membrane as a helical segment; sequence YMLNYKVWYLTLLAGLI. Over 49 to 104 the chain is Extracellular; the sequence is PFIPIKFSLFKFNNVNNQAPTVESKSHDLNHNINTTKPIQEFATDIHKFNWDSIDN. Residues 105-122 traverse the membrane as a helical segment; the sequence is ISTVIWIVLVIILSFKFL. Over 123 to 311 the chain is Cytoplasmic; the sequence is KALLYLKYLK…NLKKQSKLIL (189 aa). Residues 312–328 traverse the membrane as a helical segment; sequence IFICIFTFLLMVIQSQF. Residues 329–585 lie on the Extracellular side of the membrane; it reads LMGQSITDYN…LKEMGVLNGQ (257 aa). Residues 331-585 form a beta-lactam antibiotic sensor domain region; the sequence is GQSITDYNYK…LKEMGVLNGQ (255 aa). The active-site Acyl-ester intermediate is Ser389. Residue Lys392 is modified to N6-carboxylysine.

The protein belongs to the peptidase M56 family. Carboxylation occurs on two lysine residues. Carboxylation at 'Lys-392' activates the active site serine residue for acylation. On acylation, the lysine side chain experiences a spontaneous decarboxylation that entraps the sensor in its activated state.

It localises to the cell membrane. Its function is as follows. Integral membrane protein involved in sensing of the presence of beta-lactam antibiotics and transduction of the information to the cytoplasm. Mechanistically, activation of the signal transducer involves acylation of a serine in the C-terminal sensor domain upon binding of the beta-lactam antibiotic. In turn, a conformational change occurs and the signal is transmitted from the cell surface to the cytoplasm. There, the zinc protease domain is activated and initiates autoproteolysis as well as cleavage of the transcriptional repressor BlaI leading to derepression of antibiotic resistance genes. The protein is Regulatory protein BlaR1 (blaR1) of Staphylococcus aureus.